Consider the following 264-residue polypeptide: Phosphonoacetaldehyde hydrolase (264 aa).

Aspartate 9 functions as the Nucleophile in the catalytic mechanism. Aspartate 9 and alanine 11 together coordinate Mg(2+). Catalysis depends on lysine 50, which acts as the Schiff-base intermediate with substrate. A Mg(2+)-binding site is contributed by aspartate 183.

Belongs to the HAD-like hydrolase superfamily. PhnX family. In terms of assembly, homodimer. Mg(2+) serves as cofactor.

The catalysed reaction is phosphonoacetaldehyde + H2O = acetaldehyde + phosphate + H(+). In terms of biological role, involved in phosphonate degradation. This is Phosphonoacetaldehyde hydrolase (phnX) from Bacillus cereus.